Here is a 556-residue protein sequence, read N- to C-terminus: Urocanate hydratase (556 aa).

NAD(+)-binding positions include 52-53, glutamine 130, 176-178, glutamate 196, arginine 201, 242-243, 263-267, 273-274, and tyrosine 322; these read GG, GMG, NA, QTSAH, and YL. Cysteine 410 is a catalytic residue. Glycine 492 lines the NAD(+) pocket.

It belongs to the urocanase family. Requires NAD(+) as cofactor.

It is found in the cytoplasm. It catalyses the reaction 4-imidazolone-5-propanoate = trans-urocanate + H2O. It participates in amino-acid degradation; L-histidine degradation into L-glutamate; N-formimidoyl-L-glutamate from L-histidine: step 2/3. Functionally, catalyzes the conversion of urocanate to 4-imidazolone-5-propionate. In Shewanella sediminis (strain HAW-EB3), this protein is Urocanate hydratase.